Reading from the N-terminus, the 432-residue chain is Luc7-like protein 3 (432 aa).

M1 carries the post-translational modification N-acetylmethionine. Phosphoserine occurs at positions 3, 110, and 115. A coiled-coil region spans residues 124–181 (KNEEKIQVLTDKIDVLLQQIEELGSEGKVEEAQGMMKLVEQLKEERELLRSTTSTIES). At K231 the chain carries N6-acetyllysine. A compositionally biased stretch (basic and acidic residues) spans 234 to 287 (LRKRTEEPDRDERLKKEKQEREEREKEREREREERERKRRREEEEREKERARDR). Positions 234–432 (LRKRTEEPDR…IKSEGDTQSN (199 aa)) are disordered. The segment covering 288–301 (ERRKRSRSRSRHSS) has biased composition (basic residues). Over residues 302–311 (RTSDRRCSRS) the composition is skewed to basic and acidic residues. The segment covering 312–367 (RDHKRSRSRERRRSRSRDRRRSRSHDRSERKHRSRSRDRRRSKSRDRKSYKHRSKS) has biased composition (basic residues). The segment covering 368-414 (RDREQDRKSKEKEKRGSDDKKSSVKSGSREKQSEDTNTESKESDTKN) has biased composition (basic and acidic residues). S420 bears the Phosphoserine mark. The span at 421–432 (EDIKSEGDTQSN) shows a compositional bias: basic and acidic residues. K424 participates in a covalent cross-link: Glycyl lysine isopeptide (Lys-Gly) (interchain with G-Cter in SUMO1); alternate. Residue K424 forms a Glycyl lysine isopeptide (Lys-Gly) (interchain with G-Cter in SUMO2); alternate linkage. S425 and S431 each carry phosphoserine.

Belongs to the Luc7 family. In terms of assembly, may interact with SFRS1 and form homodimers. Interacts with JMJD6. Interacts with RBM25. Interacts with RSRC1 (via Arg/Ser-rich domain). Interacts with RRP1B. In terms of processing, phosphorylated in vitro by SRPK1, SRPK2 and CLK1. As to expression, widely expressed. Highest levels in heart, brain, pancreas, thymus, ovary, small intestine and peripheral blood leukocytes, as well as cerebellum, putamen and pituitary gland. Lowest levels in lung, liver and kidney. Also expressed in fetal tissues, including brain, heart, kidney, thymus and lung.

The protein localises to the nucleus speckle. Functionally, binds cAMP regulatory element DNA sequence. May play a role in RNA splicing. The chain is Luc7-like protein 3 (LUC7L3) from Homo sapiens (Human).